A 98-amino-acid chain; its full sequence is Probable sodium channel toxin Ts27 (98 aa).

The signal sequence occupies residues 1 to 22 (MYNMVSLFIVAVLLLTYANVEG). 4 disulfide bridges follow: Cys36/Cys88, Cys40/Cys63, Cys49/Cys68, and Cys53/Cys70.

This sequence belongs to the long (4 C-C) scorpion toxin superfamily. Sodium channel inhibitor family. Expressed by the venom gland.

The protein localises to the secreted. Its function is as follows. Probable sodium channel toxin. This Tityus serrulatus (Brazilian scorpion) protein is Probable sodium channel toxin Ts27.